A 379-amino-acid polypeptide reads, in one-letter code: Cobalt-precorrin-5B C(1)-methyltransferase (379 aa).

It belongs to the CbiD family.

The catalysed reaction is Co-precorrin-5B + S-adenosyl-L-methionine = Co-precorrin-6A + S-adenosyl-L-homocysteine. Its pathway is cofactor biosynthesis; adenosylcobalamin biosynthesis; cob(II)yrinate a,c-diamide from sirohydrochlorin (anaerobic route): step 6/10. Functionally, catalyzes the methylation of C-1 in cobalt-precorrin-5B to form cobalt-precorrin-6A. The sequence is that of Cobalt-precorrin-5B C(1)-methyltransferase from Salmonella schwarzengrund (strain CVM19633).